Here is a 177-residue protein sequence, read N- to C-terminus: Sec-independent protein translocase protein TatB (177 aa).

A helical transmembrane segment spans residues 1 to 21; sequence MFDFAWSEIAVIGVVALVVIG. A compositionally biased stretch (basic and acidic residues) spans 136–146; that stretch reads REKTVSSETAR. Positions 136 to 177 are disordered; sequence REKTVSSETARRAATAPAFIPPGEAFRSARRAPAFIPPADQG.

This sequence belongs to the TatB family. The Tat system comprises two distinct complexes: a TatABC complex, containing multiple copies of TatA, TatB and TatC subunits, and a separate TatA complex, containing only TatA subunits. Substrates initially bind to the TatABC complex, which probably triggers association of the separate TatA complex to form the active translocon.

The protein resides in the cell inner membrane. Its function is as follows. Part of the twin-arginine translocation (Tat) system that transports large folded proteins containing a characteristic twin-arginine motif in their signal peptide across membranes. Together with TatC, TatB is part of a receptor directly interacting with Tat signal peptides. TatB may form an oligomeric binding site that transiently accommodates folded Tat precursor proteins before their translocation. This chain is Sec-independent protein translocase protein TatB, found in Granulibacter bethesdensis (strain ATCC BAA-1260 / CGDNIH1).